A 23-amino-acid chain; its full sequence is Caerin-4.3 (23 aa).

In terms of tissue distribution, expressed by the skin parotoid and/or rostral glands.

The protein localises to the secreted. In terms of biological role, antibacterial peptide, that adopts an alpha helical conformation which can disrupt bacterial membranes. Each caerin displays a different antimicrobial specificity. The sequence is that of Caerin-4.3 from Ranoidea caerulea (Green tree frog).